Consider the following 298-residue polypeptide: MAPSQLPPIFNPTSQDIEMLLAAQCHLGSKNLQSHMEPYLWKTRPDGVNVINIGKTWEKILLAARIIAAIDNPADICVISARPYGQRAVLKFASHTGATAIAGRFTPGNFTNYITRSFKEPRLIIVTDPRTDAQAIKEASYVNIPVIALCDTDSPTDFVDVAIPTNNKGRHAIGLVWWLLAREVLRLRGTLASREVDWDVVVDLYFYRDPEAEENKEVVEEKVASAEEVGAGAIESGFAGENWDVAGAGAGVPGTAFAAASAAAGAASWEAEGGDWAASSAAPAGESWAEAQPTEAKW.

A disordered region spans residues 272–298 (EGGDWAASSAAPAGESWAEAQPTEAKW).

It belongs to the universal ribosomal protein uS2 family. As to quaternary structure, component of the small ribosomal subunit. Mature ribosomes consist of a small (40S) and a large (60S) subunit. The 40S subunit contains about 33 different proteins and 1 molecule of RNA (18S). The 60S subunit contains about 49 different proteins and 3 molecules of RNA (25S, 5.8S and 5S). Interacts with rps21.

It is found in the cytoplasm. Functionally, required for the assembly and/or stability of the 40S ribosomal subunit. Required for the processing of the 20S rRNA-precursor to mature 18S rRNA in a late step of the maturation of 40S ribosomal subunits. In Aspergillus niger (strain ATCC MYA-4892 / CBS 513.88 / FGSC A1513), this protein is Small ribosomal subunit protein uS2 (rps0).